The following is an 82-amino-acid chain: uncharacterized protein (82 aa).

The protein belongs to the chlamydial CPn_0710/CT_666/TC_0037 family.

This is an uncharacterized protein from Chlamydia muridarum (strain MoPn / Nigg).